A 106-amino-acid polypeptide reads, in one-letter code: MKSCCGENAISDIESSAGLLMTISLAKSFSFAIAVLVPKAEVVFDRLKKDIVPHFSSSYVFLYFIVICRLRFMIFDQGGCAGMIGMVSLPNSYKSVSVQVKWLYSA.

2 helical membrane passes run 17–37 and 55–75; these read AGLL…AVLV and FSSS…FMIF.

It is found in the membrane. This is an uncharacterized protein from Saccharomyces cerevisiae (strain ATCC 204508 / S288c) (Baker's yeast).